The chain runs to 337 residues: Fructose-1,6-bisphosphatase class 1 (337 aa).

Positions 94, 116, 118, and 119 each coordinate Mg(2+). Residues aspartate 119–serine 122, asparagine 210, and lysine 276 each bind substrate. Glutamate 282 serves as a coordination point for Mg(2+).

The protein belongs to the FBPase class 1 family. Homotetramer. Requires Mg(2+) as cofactor.

The protein localises to the cytoplasm. It carries out the reaction beta-D-fructose 1,6-bisphosphate + H2O = beta-D-fructose 6-phosphate + phosphate. The protein operates within carbohydrate biosynthesis; gluconeogenesis. The sequence is that of Fructose-1,6-bisphosphatase class 1 from Burkholderia multivorans (strain ATCC 17616 / 249).